The primary structure comprises 1495 residues: DNA-directed RNA polymerase subunit 1 (1495 aa).

Belongs to the RNA polymerase beta' chain family.

Its subcellular location is the virion. The catalysed reaction is RNA(n) + a ribonucleoside 5'-triphosphate = RNA(n+1) + diphosphate. DNA-dependent RNA polymerase catalyzes the transcription of DNA into RNA using the four ribonucleoside triphosphates as substrates. This is DNA-directed RNA polymerase subunit 1 (RPO1) from Acanthamoeba polyphaga (Amoeba).